Here is a 534-residue protein sequence, read N- to C-terminus: CTP synthase (534 aa).

Positions 1-267 (MTKYIFVTGG…DQIVCDHLKL (267 aa)) are amidoligase domain. A CTP-binding site is contributed by S13. UTP is bound at residue S13. Residue 14-19 (SIGKGI) participates in ATP binding. Position 54 (Y54) interacts with L-glutamine. ATP is bound at residue D71. D71 and E141 together coordinate Mg(2+). Residues 148–150 (DIE), 188–193 (KTKPTQ), and K224 each bind CTP. Residues 188–193 (KTKPTQ) and K224 each bind UTP. The 243-residue stretch at 292–534 (KIALVGKYVE…FVTAAVENAK (243 aa)) folds into the Glutamine amidotransferase type-1 domain. G354 contributes to the L-glutamine binding site. The Nucleophile; for glutamine hydrolysis role is filled by C381. L-glutamine-binding positions include 382-385 (LGMQ), E405, and R463. Catalysis depends on residues H508 and E510.

The protein belongs to the CTP synthase family. In terms of assembly, homotetramer.

It catalyses the reaction UTP + L-glutamine + ATP + H2O = CTP + L-glutamate + ADP + phosphate + 2 H(+). The enzyme catalyses L-glutamine + H2O = L-glutamate + NH4(+). The catalysed reaction is UTP + NH4(+) + ATP = CTP + ADP + phosphate + 2 H(+). It functions in the pathway pyrimidine metabolism; CTP biosynthesis via de novo pathway; CTP from UDP: step 2/2. With respect to regulation, allosterically activated by GTP, when glutamine is the substrate; GTP has no effect on the reaction when ammonia is the substrate. The allosteric effector GTP functions by stabilizing the protein conformation that binds the tetrahedral intermediate(s) formed during glutamine hydrolysis. Inhibited by the product CTP, via allosteric rather than competitive inhibition. Its function is as follows. Catalyzes the ATP-dependent amination of UTP to CTP with either L-glutamine or ammonia as the source of nitrogen. Regulates intracellular CTP levels through interactions with the four ribonucleotide triphosphates. This is CTP synthase from Streptococcus thermophilus (strain CNRZ 1066).